Consider the following 172-residue polypeptide: Protein LOL2 (172 aa).

Putative zinc finger regions lie at residues 4–34 (QIVC…VSST), 44–74 (HLIC…VNLV), and 82–112 (HLNC…ITNT).

It is found in the nucleus. Putative zinc finger that may be involved in programmed cell death and defense response. The protein is Protein LOL2 (LOL2) of Oryza sativa subsp. japonica (Rice).